We begin with the raw amino-acid sequence, 290 residues long: Endoplasmic reticulum-Golgi intermediate compartment protein 1 (290 aa).

Residues 1-26 (MPFDFRRFDIYRKVPKDLTQPTYTGA) lie on the Cytoplasmic side of the membrane. Residues 27-47 (IISICCCLFITFLFLSELTGF) form a helical membrane-spanning segment. The Lumenal segment spans residues 48-254 (IANEIVNELY…RRQPMYRFIT (207 aa)). A glycan (N-linked (GlcNAc...) asparagine) is linked at Asn74. The helical transmembrane segment at 255 to 275 (TVCAIIGGTFTVAGILDSFIF) threads the bilayer. Residues 276–290 (TASEAWKKIQLGKMQ) lie on the Cytoplasmic side of the membrane.

Belongs to the ERGIC family.

Its subcellular location is the endoplasmic reticulum membrane. It localises to the endoplasmic reticulum-Golgi intermediate compartment membrane. The protein localises to the golgi apparatus membrane. Its function is as follows. Possible role in transport between endoplasmic reticulum and Golgi. The polypeptide is Endoplasmic reticulum-Golgi intermediate compartment protein 1 (ergic1) (Xenopus laevis (African clawed frog)).